The primary structure comprises 375 residues: Chaperone protein DnaJ (375 aa).

One can recognise a J domain in the interval 4–68 (DYYEILGVSR…ETRARYDRFG (65 aa)). The CR-type zinc-finger motif lies at 135 to 217 (GGEKEIRISH…CDGKGANQVT (83 aa)). Residues C148, C151, C165, C168, C191, C194, C205, and C208 each coordinate Zn(2+). 4 CXXCXGXG motif repeats span residues 148-155 (CEVCSGSG), 165-172 (CSTCSGSG), 191-198 (CPTCNGTG), and 205-212 (CDACDGKG).

It belongs to the DnaJ family. In terms of assembly, homodimer. Zn(2+) serves as cofactor.

The protein localises to the cytoplasm. Its function is as follows. Participates actively in the response to hyperosmotic and heat shock by preventing the aggregation of stress-denatured proteins and by disaggregating proteins, also in an autonomous, DnaK-independent fashion. Unfolded proteins bind initially to DnaJ; upon interaction with the DnaJ-bound protein, DnaK hydrolyzes its bound ATP, resulting in the formation of a stable complex. GrpE releases ADP from DnaK; ATP binding to DnaK triggers the release of the substrate protein, thus completing the reaction cycle. Several rounds of ATP-dependent interactions between DnaJ, DnaK and GrpE are required for fully efficient folding. Also involved, together with DnaK and GrpE, in the DNA replication of plasmids through activation of initiation proteins. This is Chaperone protein DnaJ from Nostoc punctiforme (strain ATCC 29133 / PCC 73102).